The primary structure comprises 689 residues: Homoaconitase, mitochondrial (689 aa).

The transit peptide at 1-17 directs the protein to the mitochondrion; the sequence is MVVLRRSFHVYTRLQRG. Residues cysteine 336, cysteine 403, and cysteine 406 each contribute to the [4Fe-4S] cluster site.

This sequence belongs to the aconitase/IPM isomerase family. The cofactor is [4Fe-4S] cluster.

Its subcellular location is the mitochondrion. It carries out the reaction (2R,3S)-homoisocitrate = cis-homoaconitate + H2O. Its pathway is amino-acid biosynthesis; L-lysine biosynthesis via AAA pathway; L-alpha-aminoadipate from 2-oxoglutarate: step 3/5. Functionally, catalyzes the reversible hydration of cis-homoaconitate to (2R,3S)-homoisocitrate, a step in the alpha-aminoadipate pathway for lysine biosynthesis. This is Homoaconitase, mitochondrial (LYS4) from Candida glabrata (strain ATCC 2001 / BCRC 20586 / JCM 3761 / NBRC 0622 / NRRL Y-65 / CBS 138) (Yeast).